Reading from the N-terminus, the 145-residue chain is uncharacterized protein (145 aa).

Met-1 bears the N-acetylmethionine mark. The disordered stretch occupies residues 15–41 (QLKNNSGGTNGDRNSGANNGGGENSAP). The segment covering 16–27 (LKNNSGGTNGDR) has biased composition (polar residues). A phosphoserine mark is found at Ser-121 and Ser-126. A disordered region spans residues 125 to 145 (NSFDKQNAKNDDDEDDDDFFD). The segment covering 135–145 (DDDEDDDDFFD) has biased composition (acidic residues).

The protein belongs to the PDCD5 family.

This is an uncharacterized protein from Saccharomyces cerevisiae (strain ATCC 204508 / S288c) (Baker's yeast).